Reading from the N-terminus, the 507-residue chain is Beta-glucosidase 3 (507 aa).

Positions 1-23 (MELTLSLLTIFLLFFALSGRCSD) are cleaved as a signal peptide. Q41 contacts a beta-D-glucoside. N64 carries an N-linked (GlcNAc...) asparagine glycan. A beta-D-glucoside contacts are provided by residues H138 and 183–184 (NE). The active-site Proton donor is the E184. C203 and C210 are joined by a disulfide. N-linked (GlcNAc...) asparagine glycans are attached at residues N209 and N214. An a beta-D-glucoside-binding site is contributed by Y326. N-linked (GlcNAc...) asparagine glycosylation occurs at N361. E394 contacts a beta-D-glucoside. Catalysis depends on E394, which acts as the Nucleophile. Residue N429 is glycosylated (N-linked (GlcNAc...) asparagine). W439 and F455 together coordinate a beta-D-glucoside. N-linked (GlcNAc...) asparagine glycans are attached at residues N461, N485, and N500.

The protein belongs to the glycosyl hydrolase 1 family.

The catalysed reaction is Hydrolysis of terminal, non-reducing beta-D-glucosyl residues with release of beta-D-glucose.. The polypeptide is Beta-glucosidase 3 (Arabidopsis thaliana (Mouse-ear cress)).